Consider the following 199-residue polypeptide: Thymidylate kinase (199 aa).

Residue 7 to 14 (GTEGVGKT) coordinates ATP.

It belongs to the thymidylate kinase family.

The catalysed reaction is dTMP + ATP = dTDP + ADP. Its function is as follows. Phosphorylation of dTMP to form dTDP in both de novo and salvage pathways of dTTP synthesis. The chain is Thymidylate kinase from Acinetobacter baumannii (strain AB307-0294).